A 174-amino-acid chain; its full sequence is Large ribosomal subunit protein uL6 (174 aa).

The protein belongs to the universal ribosomal protein uL6 family. As to quaternary structure, part of the 50S ribosomal subunit.

In terms of biological role, this protein binds to the 23S rRNA, and is important in its secondary structure. It is located near the subunit interface in the base of the L7/L12 stalk, and near the tRNA binding site of the peptidyltransferase center. This chain is Large ribosomal subunit protein uL6, found in Stenotrophomonas maltophilia (strain R551-3).